The sequence spans 176 residues: Disulfide bond formation protein B (176 aa).

Residues 1–14 (MMRSLNRCSKHRAA) are Cytoplasmic-facing. Residues 15–31 (WLLLALTTFSLELVALY) form a helical membrane-spanning segment. Topologically, residues 32–49 (FQHVMLLKPCVLCVYQRC) are periplasmic. Cys41 and Cys44 are joined by a disulfide. The helical transmembrane segment at 50–65 (ALYGVVAAGLVGAIAP) threads the bilayer. Over 66 to 71 (ATPLRF) the chain is Cytoplasmic. Residues 72–89 (SGLAIWLYSAWEGLQLAM) form a helical membrane-spanning segment. The Periplasmic portion of the chain corresponds to 90 to 144 (KHTDIQLHPSPFVTCDFFVSFPAWLPLDKWLPSVFSASGDCAVRQWHFLSLEMPQ). Cys104 and Cys130 are oxidised to a cystine. A helical transmembrane segment spans residues 145 to 163 (WMIVIFGAYLAVAVLILLA). Residues 164–176 (QFFPPRKRDLFSR) lie on the Cytoplasmic side of the membrane.

The protein belongs to the DsbB family.

The protein resides in the cell inner membrane. Its function is as follows. Required for disulfide bond formation in some periplasmic proteins. Acts by oxidizing the DsbA protein. The sequence is that of Disulfide bond formation protein B from Sodalis glossinidius (strain morsitans).